The chain runs to 204 residues: MKVKICGITDMETAKRACEYGADALGFVFAESKRKITPGLAKEIIQELPANVLKIGVFVNESVEVIQKITENCGLTHVQLHGGEDNHQIRRLNIPSIKSLGVTSESDMKNAQGYETDYILFDSPKEKFHGGNGKAFPWELLAHMPKELREKTILAGGLNTLNIEEAIRTVRPYMVDVSSGVETEGKKDVEKIKQFIIKAKECSK.

The protein belongs to the TrpF family.

The enzyme catalyses N-(5-phospho-beta-D-ribosyl)anthranilate = 1-(2-carboxyphenylamino)-1-deoxy-D-ribulose 5-phosphate. The protein operates within amino-acid biosynthesis; L-tryptophan biosynthesis; L-tryptophan from chorismate: step 3/5. The polypeptide is N-(5'-phosphoribosyl)anthranilate isomerase (Bacillus cereus (strain AH820)).